The following is a 314-amino-acid chain: Methionyl-tRNA formyltransferase (314 aa).

109 to 112 lines the (6S)-5,6,7,8-tetrahydrofolate pocket; that stretch reads SLLP.

Belongs to the Fmt family.

It carries out the reaction L-methionyl-tRNA(fMet) + (6R)-10-formyltetrahydrofolate = N-formyl-L-methionyl-tRNA(fMet) + (6S)-5,6,7,8-tetrahydrofolate + H(+). In terms of biological role, attaches a formyl group to the free amino group of methionyl-tRNA(fMet). The formyl group appears to play a dual role in the initiator identity of N-formylmethionyl-tRNA by promoting its recognition by IF2 and preventing the misappropriation of this tRNA by the elongation apparatus. This Alkaliphilus metalliredigens (strain QYMF) protein is Methionyl-tRNA formyltransferase.